A 28-amino-acid polypeptide reads, in one-letter code: Conotoxin as14b (28 aa).

Disulfide bonds link C7-C27 and C11-C23.

It belongs to the conotoxin L superfamily. Expressed by the venom duct.

Its subcellular location is the secreted. In terms of biological role, in vivo, intracranial injection elicits scratching and grooming activity in mice, and causes body and rear limb extension and tail curling immediately upon injection. This chain is Conotoxin as14b, found in Conus cancellatus (Cancellate cone).